A 118-amino-acid chain; its full sequence is MCDKEFMWALKNGDLDEVKDYVAKGEDVNRTLEGGRKPLHYAADCGQLEILEFLLLKGADINAPDKHHITPLLSAVYEGHVSCVKLLLSKGADKTVKGPDGLTAFEATDNQAIKALLQ.

C2 carries the post-translational modification N-acetylcysteine. An ANK 1 repeat occupies 2–30 (CDKEFMWALKNGDLDEVKDYVAKGEDVNR). K4, K11, and K24 each carry N6-acetyllysine. T31 is modified (phosphothreonine). 2 ANK repeats span residues 34-66 (GGRK…APDK) and 67-99 (HHIT…VKGP).

The protein belongs to the myotrophin family. In terms of assembly, interacts with RELA. Interacts with the heterodimer formed by CAPZA1 and CAPZB.

Its subcellular location is the cytoplasm. It localises to the nucleus. The protein resides in the perinuclear region. Functionally, promotes dimerization of NF-kappa-B subunits and regulates NF-kappa-B transcription factor activity. Promotes growth of cardiomyocytes, but not cardiomyocyte proliferation. Promotes cardiac muscle hypertrophy. Plays a role in the regulation of the growth of actin filaments. Inhibits the activity of the F-actin-capping protein complex formed by the CAPZA1 and CAPZB heterodimer. The sequence is that of Myotrophin (MTPN) from Bos taurus (Bovine).